Reading from the N-terminus, the 227-residue chain is MKHFIGNDWDHVLAPVFESGEYHKLHVFLKKEYQTKQIYPDMYHIFTAFKLTPFKDTKVVILGQDPYHNPSQANGMSFSVMPGTPLPPSLRNIYKELYDDVGAQPVNHGYLKRWADQGVLLLNAVLTVPYGQANGHQGKGWEMVTDAAIKALSERGQVVFILWGRFAQNKIPLIDQDKNVIIKSAHPSPFSANRGFFGSRPFSRCNAALKEFGRAPVDWQLPPNTEA.

The Proton acceptor role is filled by aspartate 65.

This sequence belongs to the uracil-DNA glycosylase (UDG) superfamily. UNG family.

The protein localises to the cytoplasm. It carries out the reaction Hydrolyzes single-stranded DNA or mismatched double-stranded DNA and polynucleotides, releasing free uracil.. Its function is as follows. Excises uracil residues from the DNA which can arise as a result of misincorporation of dUMP residues by DNA polymerase or due to deamination of cytosine. The chain is Uracil-DNA glycosylase from Lactobacillus delbrueckii subsp. bulgaricus (strain ATCC BAA-365 / Lb-18).